A 311-amino-acid chain; its full sequence is Malate dehydrogenase (311 aa).

NAD(+) contacts are provided by residues glycine 7 to glycine 13 and aspartate 34. 2 residues coordinate substrate: arginine 81 and arginine 87. NAD(+) is bound by residues asparagine 94 and isoleucine 117–asparagine 119. 2 residues coordinate substrate: asparagine 119 and arginine 153. Histidine 177 serves as the catalytic Proton acceptor. Methionine 227 lines the NAD(+) pocket.

This sequence belongs to the LDH/MDH superfamily. MDH type 1 family. Homodimer.

It carries out the reaction (S)-malate + NAD(+) = oxaloacetate + NADH + H(+). Functionally, catalyzes the reversible oxidation of malate to oxaloacetate. In Shewanella halifaxensis (strain HAW-EB4), this protein is Malate dehydrogenase.